A 249-amino-acid chain; its full sequence is MDDRIINFEPLIEGVLIKRYKRFLSDIKLDNGEIVTAHCANTGPMKGLLNEGAKVRISYSSSPKRKLSWTWEQVEVTGINNEKVWVGINTLFANKLIKTVIEKNLLKDKLGDIATIQSEVVYGQDKKSRIDFLLTPKISNPDNRKIFIEVKNTTWKKNKIALFPDTETKRGQKHLIELKGVMPESKSVLVPCITRKDVDFFGPGDEADPIYGDLFRDSIDAGMLLIPCCFEFHKDHITWKGFKPLKLDG.

Belongs to the SfsA family.

This Prochlorococcus marinus (strain MIT 9515) protein is Sugar fermentation stimulation protein homolog.